Consider the following 82-residue polypeptide: MVFLLCFFLVADVSYGINGDCELPKVVGPCRAGFRRYYYNSSSKRCEKFIYGGCRGNANNFHTLEECEKVCGVRSRDSPKEN.

Positions 1–16 (MVFLLCFFLVADVSYG) are cleaved as a signal peptide. Residues 21-71 (CELPKVVGPCRAGFRRYYYNSSSKRCEKFIYGGCRGNANNFHTLEECEKVC) form the BPTI/Kunitz inhibitor domain. 3 disulfides stabilise this stretch: cysteine 21–cysteine 71, cysteine 30–cysteine 54, and cysteine 46–cysteine 67. A propeptide spanning residues 76 to 82 (RDSPKEN) is cleaved from the precursor.

It belongs to the venom Kunitz-type family. Sea anemone type 2 potassium channel toxin subfamily.

It is found in the secreted. It localises to the nematocyst. Functionally, serine protease inhibitor that inhibits both tissue and plasma kallikreins. Has hemolytic activity. Inhibits voltage-gated potassium channels (Kv). The chain is U-actitoxin-Avd3i from Anemonia viridis (Snakelocks anemone).